We begin with the raw amino-acid sequence, 1287 residues long: DENN domain-containing protein 5A (1287 aa).

Positions 57–259 (STTEGENFEQ…EVPLPPPGRS (203 aa)) constitute a uDENN domain. Ser193 is modified (phosphoserine). The cDENN domain occupies 278-414 (ELPLFDFPVK…LEFVQEVSEI (137 aa)). One can recognise a dDENN domain in the interval 416–598 (MAFGVPPEGN…IMCHDDDDKD (183 aa)). One can recognise an RUN 1 domain in the interval 787-950 (VEENTLIASL…DYFCFTNVFT (164 aa)). The 109-residue stretch at 954-1062 (IPYHILIVPS…DDGSLERVLV (109 aa)) folds into the PLAT domain. Phosphothreonine is present on Thr1079. 3 positions are modified to phosphoserine: Ser1085, Ser1087, and Ser1096. Residues 1134-1280 (TLLLCGECGL…QEFNITLDTS (147 aa)) enclose the RUN 2 domain.

The protein belongs to the RAB6IP1 family. As to quaternary structure, interacts with RAB6A bound to GTP.

Its subcellular location is the golgi apparatus membrane. Functionally, guanine nucleotide exchange factor (GEF) which may activate RAB6A and RAB39A and/or RAB39B. Promotes the exchange of GDP to GTP, converting inactive GDP-bound Rab proteins into their active GTP-bound form. Involved in the negative regulation of neurite outgrowth. The polypeptide is DENN domain-containing protein 5A (Dennd5a) (Mus musculus (Mouse)).